We begin with the raw amino-acid sequence, 925 residues long: TBC1 domain family member 2A (925 aa).

M1 is subject to N-acetylmethionine. The interval 1-41 (MEGAQESPAESGSSVPWSEEPAGSAKVPEVSLSEESEGCTR) is disordered. The tract at residues 1–171 (MEGAQESPAE…AGNGPALRLE (171 aa)) is interaction with CADH1. A PH domain is found at 47–144 (PPKLCGYLSK…WLQQLQMKRW (98 aa)). Residues 231–278 (NKQTQGANHRPPGEDSPLIEETQREEQPSPPGPGAPGKDPANSLKSSL) are disordered. Positions 297–435 (SEGLMRNRTA…KVTQDFMKAP (139 aa)) are interaction with RAC1. Residues 302-475 (RNRTAQEKVL…LNSEIHQVTK (174 aa)) adopt a coiled-coil conformation. Residues 622–814 (GVPHEHRPRV…QVWDAFLYEG (193 aa)) enclose the Rab-GAP TBC domain. The stretch at 872–907 (MKQLRQLRAAHRERLEAELNELEQLKAEYLETRAAQ) forms a coiled coil. The tract at residues 904 to 925 (RAAQGPAVPEGSPSEDEGEAEP) is disordered. Residues 916–925 (PSEDEGEAEP) are compositionally biased toward acidic residues. S917 carries the phosphoserine modification.

Interacts with activated RAC1 and CDH1.

The protein resides in the cytoplasm. It is found in the cytoplasmic vesicle. It localises to the cell junction. In terms of biological role, may act as a GTPase-activating protein for Rab family protein(s). Signal effector acting as a linker between RAC1 and RAB7A, leading to RAB7A inactivation and further inhibition of cadherin degradation. The sequence is that of TBC1 domain family member 2A (TBC1D2) from Bos taurus (Bovine).